Here is a 146-residue protein sequence, read N- to C-terminus: Hemoglobin subunit beta (146 aa).

Residues 2–146 form the Globin domain; the sequence is HWTAEEKQLI…VAHALARKYH (145 aa). Positions 63 and 92 each coordinate heme b.

It belongs to the globin family. As to quaternary structure, heterotetramer of two alpha chains and two beta chains. Red blood cells.

Involved in oxygen transport from the lung to the various peripheral tissues. This is Hemoglobin subunit beta (HBB) from Ara ararauna (Blue-and-yellow macaw).